The following is a 127-amino-acid chain: UPF0102 protein NFA_41430 (127 aa).

It belongs to the UPF0102 family.

This chain is UPF0102 protein NFA_41430, found in Nocardia farcinica (strain IFM 10152).